Here is a 147-residue protein sequence, read N- to C-terminus: uncharacterized protein (147 aa).

Residues 3-23 (APMVGMVVLVVTLGAAVLALS) form a helical membrane-spanning segment.

It to M.tuberculosis Rv1312.

It localises to the membrane. This is an uncharacterized protein from Mycobacterium leprae (strain TN).